We begin with the raw amino-acid sequence, 155 residues long: RNA pyrophosphohydrolase (155 aa).

In terms of domain architecture, Nudix hydrolase spans 6–148; the sequence is GYRANVAIVL…KQDVYRRALT (143 aa). Positions 38-59 match the Nudix box motif; that stretch reads GGVATGETPLQAMYRELYEEVG.

The protein belongs to the Nudix hydrolase family. RppH subfamily. The cofactor is a divalent metal cation.

Accelerates the degradation of transcripts by removing pyrophosphate from the 5'-end of triphosphorylated RNA, leading to a more labile monophosphorylated state that can stimulate subsequent ribonuclease cleavage. This chain is RNA pyrophosphohydrolase, found in Francisella philomiragia subsp. philomiragia (strain ATCC 25017 / CCUG 19701 / FSC 153 / O#319-036).